We begin with the raw amino-acid sequence, 248 residues long: DNA repair protein RecO (248 aa).

The protein belongs to the RecO family.

Its function is as follows. Involved in DNA repair and RecF pathway recombination. This Bacillus cytotoxicus (strain DSM 22905 / CIP 110041 / 391-98 / NVH 391-98) protein is DNA repair protein RecO.